We begin with the raw amino-acid sequence, 82 residues long: Small ribosomal subunit protein uS17 (82 aa).

This sequence belongs to the universal ribosomal protein uS17 family. As to quaternary structure, part of the 30S ribosomal subunit.

Its function is as follows. One of the primary rRNA binding proteins, it binds specifically to the 5'-end of 16S ribosomal RNA. The protein is Small ribosomal subunit protein uS17 of Phenylobacterium zucineum (strain HLK1).